Here is a 130-residue protein sequence, read N- to C-terminus: Small ribosomal subunit protein uS8 (130 aa).

It belongs to the universal ribosomal protein uS8 family. Part of the 30S ribosomal subunit.

In terms of biological role, one of the primary rRNA binding proteins, it binds directly to 16S rRNA central domain where it helps coordinate assembly of the platform of the 30S subunit. The polypeptide is Small ribosomal subunit protein uS8 (Methanopyrus kandleri (strain AV19 / DSM 6324 / JCM 9639 / NBRC 100938)).